A 186-amino-acid chain; its full sequence is Interferon beta-3 (186 aa).

An N-terminal signal peptide occupies residues 1-21 (MTYRCLLPMVLLLCFSTTALS). Cys52 and Cys161 are joined by a disulfide. 2 N-linked (GlcNAc...) asparagine glycosylation sites follow: Asn131 and Asn173.

The protein belongs to the alpha/beta interferon family. In terms of assembly, monomer.

The protein resides in the secreted. Functionally, has antiviral, antibacterial and anticancer activities. This chain is Interferon beta-3 (IFNB3), found in Bos taurus (Bovine).